A 120-amino-acid chain; its full sequence is Large ribosomal subunit protein bL19 (120 aa).

It belongs to the bacterial ribosomal protein bL19 family.

Its function is as follows. This protein is located at the 30S-50S ribosomal subunit interface and may play a role in the structure and function of the aminoacyl-tRNA binding site. The polypeptide is Large ribosomal subunit protein bL19 (Chlorobium chlorochromatii (strain CaD3)).